The sequence spans 556 residues: Dihydroxy-acid dehydratase (556 aa).

Residue Asp78 coordinates Mg(2+). Position 119 (Cys119) interacts with [2Fe-2S] cluster. Mg(2+) contacts are provided by Asp120 and Lys121. Position 121 is an N6-carboxylysine (Lys121). Cys191 contributes to the [2Fe-2S] cluster binding site. Glu442 provides a ligand contact to Mg(2+). Ser468 functions as the Proton acceptor in the catalytic mechanism.

It belongs to the IlvD/Edd family. In terms of assembly, homodimer. [2Fe-2S] cluster serves as cofactor. Mg(2+) is required as a cofactor.

The enzyme catalyses (2R)-2,3-dihydroxy-3-methylbutanoate = 3-methyl-2-oxobutanoate + H2O. It catalyses the reaction (2R,3R)-2,3-dihydroxy-3-methylpentanoate = (S)-3-methyl-2-oxopentanoate + H2O. The protein operates within amino-acid biosynthesis; L-isoleucine biosynthesis; L-isoleucine from 2-oxobutanoate: step 3/4. It functions in the pathway amino-acid biosynthesis; L-valine biosynthesis; L-valine from pyruvate: step 3/4. Its function is as follows. Functions in the biosynthesis of branched-chain amino acids. Catalyzes the dehydration of (2R,3R)-2,3-dihydroxy-3-methylpentanoate (2,3-dihydroxy-3-methylvalerate) into 2-oxo-3-methylpentanoate (2-oxo-3-methylvalerate) and of (2R)-2,3-dihydroxy-3-methylbutanoate (2,3-dihydroxyisovalerate) into 2-oxo-3-methylbutanoate (2-oxoisovalerate), the penultimate precursor to L-isoleucine and L-valine, respectively. The protein is Dihydroxy-acid dehydratase of Clostridium beijerinckii (strain ATCC 51743 / NCIMB 8052) (Clostridium acetobutylicum).